The sequence spans 95 residues: Aspartyl/glutamyl-tRNA(Asn/Gln) amidotransferase subunit C (95 aa).

This sequence belongs to the GatC family. Heterotrimer of A, B and C subunits.

The enzyme catalyses L-glutamyl-tRNA(Gln) + L-glutamine + ATP + H2O = L-glutaminyl-tRNA(Gln) + L-glutamate + ADP + phosphate + H(+). The catalysed reaction is L-aspartyl-tRNA(Asn) + L-glutamine + ATP + H2O = L-asparaginyl-tRNA(Asn) + L-glutamate + ADP + phosphate + 2 H(+). Its function is as follows. Allows the formation of correctly charged Asn-tRNA(Asn) or Gln-tRNA(Gln) through the transamidation of misacylated Asp-tRNA(Asn) or Glu-tRNA(Gln) in organisms which lack either or both of asparaginyl-tRNA or glutaminyl-tRNA synthetases. The reaction takes place in the presence of glutamine and ATP through an activated phospho-Asp-tRNA(Asn) or phospho-Glu-tRNA(Gln). The sequence is that of Aspartyl/glutamyl-tRNA(Asn/Gln) amidotransferase subunit C from Bradyrhizobium sp. (strain ORS 278).